Reading from the N-terminus, the 233-residue chain is Thrombin-like enzyme elegaxobin-2 (233 aa).

A Peptidase S1 domain is found at 1–224 (VIGGDECNIN…HLDWIKGIIA (224 aa)). Disulfide bonds link cysteine 7–cysteine 138, cysteine 25–cysteine 41, cysteine 73–cysteine 231, cysteine 117–cysteine 185, cysteine 149–cysteine 164, and cysteine 175–cysteine 200. Histidine 40 serves as the catalytic Charge relay system. N-linked (GlcNAc...) asparagine glycosylation occurs at asparagine 78. The active-site Charge relay system is the aspartate 85. Catalysis depends on serine 179, which acts as the Charge relay system.

This sequence belongs to the peptidase S1 family. Snake venom subfamily. Monomer. As to expression, expressed by the venom gland.

It is found in the secreted. Thrombin-like snake venom serine protease that clots rabbit fibrinogen. Only the beta chain of fibrinogen (FGB) is cleaved, releasing fibrinopeptide B. Human and bovine fibrinogen are unaffected. Also cleaves Met-Lys and Arg-Ser bonds in heat-denatured bovine plasma kininogen to release Lys-bradykinin. The chain is Thrombin-like enzyme elegaxobin-2 from Protobothrops elegans (Elegant pitviper).